The following is a 417-amino-acid chain: Pygopus homolog 1 (417 aa).

A compositionally biased stretch (basic and acidic residues) spans 1–11 (MSAEQDKEPIA). 3 disordered regions span residues 1–71 (MSAE…AANP), 175–265 (HFRQ…MEDP), and 284–318 (ENSR…CTPD). Gly residues predominate over residues 18–27 (GDSGLDGLGG). A Nuclear localization signal motif is present at residues 35–41 (PDKKKRK). 3 stretches are compositionally biased toward polar residues: residues 180-221 (SAEN…TNHS), 240-256 (DFTQ…SSTH), and 284-305 (ENSR…QNKP). A PHD-type zinc finger spans residues 338-396 (VYPCGICTNEVNDDQDAILCEASCQKWFHRICTGMTETAYGLLTAEASAVWGCDTCMAD). Positions 339 to 386 (YPCGICTNEVNDDQDAILCEASCQKWFHRICTGMTETAYGLLTAEASA) are interaction with H3K4me2. Residues 371-389 (GMTETAYGLLTAEASAVWG) form an interaction with BCL9 region.

Interacts with BCL9 via The PHD-type zinc finger motiv, and thereby becomes part of the nuclear beta-catenin/TCF complex. Found in a complex with BCL9L, CDC73, CTNNB1 and PYGO1. Interacts with histone H3 mono-, di- or tri-methylated at 'Lys4' (H3K4me1, H3K4me2, H3K4me3); the interaction is enhanced by the interaction with BCL9.

It is found in the nucleus. Its function is as follows. Involved in signal transduction through the Wnt pathway. In Mus musculus (Mouse), this protein is Pygopus homolog 1 (Pygo1).